The primary structure comprises 438 residues: Histidinol dehydrogenase (438 aa).

Tyr138, Gln199, and Asn222 together coordinate NAD(+). Substrate is bound by residues Ser245, Gln267, and His270. Residues Gln267 and His270 each contribute to the Zn(2+) site. Catalysis depends on proton acceptor residues Glu335 and His336. Residues His336, Asp369, Glu423, and His428 each coordinate substrate. Asp369 contributes to the Zn(2+) binding site. His428 is a Zn(2+) binding site.

The protein belongs to the histidinol dehydrogenase family. It depends on Zn(2+) as a cofactor.

The catalysed reaction is L-histidinol + 2 NAD(+) + H2O = L-histidine + 2 NADH + 3 H(+). It participates in amino-acid biosynthesis; L-histidine biosynthesis; L-histidine from 5-phospho-alpha-D-ribose 1-diphosphate: step 9/9. Catalyzes the sequential NAD-dependent oxidations of L-histidinol to L-histidinaldehyde and then to L-histidine. The sequence is that of Histidinol dehydrogenase from Burkholderia lata (strain ATCC 17760 / DSM 23089 / LMG 22485 / NCIMB 9086 / R18194 / 383).